We begin with the raw amino-acid sequence, 305 residues long: Protoheme IX farnesyltransferase 2 (305 aa).

The next 8 helical transmembrane spans lie at 38–58, 60–80, 115–135, 157–177, 181–201, 227–247, 249–269, and 285–305; these read LITTFTGMWLALHISGLSFLG, INTVLLTLIGSSLIIAGSCAI, ILLVALGLIMLLMTTVMAAVI, INTVVGSVSGAVPPLIGWTAV, IGVVAWVLFMILFIWQIPHFL, VTKRQIIVWVACLMPLPFFLG, LGLPIVILGLLLNIGWLILGL, and FVYSLNYMTIYFVAMVVLTLF.

Belongs to the UbiA prenyltransferase family. Protoheme IX farnesyltransferase subfamily. In terms of assembly, interacts with CtaA.

Its subcellular location is the cell membrane. It catalyses the reaction heme b + (2E,6E)-farnesyl diphosphate + H2O = Fe(II)-heme o + diphosphate. It participates in porphyrin-containing compound metabolism; heme O biosynthesis; heme O from protoheme: step 1/1. Its function is as follows. Converts heme B (protoheme IX) to heme O by substitution of the vinyl group on carbon 2 of heme B porphyrin ring with a hydroxyethyl farnesyl side group. This chain is Protoheme IX farnesyltransferase 2 (ctaB2), found in Bacillus subtilis (strain 168).